The primary structure comprises 557 residues: CTP synthase (557 aa).

An amidoligase domain region spans residues 1–270; it reads MTKYVFVTGG…DAIICEELKL (270 aa). Ser13 serves as a coordination point for CTP. Ser13 lines the UTP pocket. ATP-binding positions include 14–19 and Asp71; that span reads SLGKGI. Mg(2+) is bound by residues Asp71 and Glu144. Residues 151 to 153, 191 to 196, and Lys227 contribute to the CTP site; these read DIE and KTKPTQ. UTP contacts are provided by residues 191 to 196 and Lys227; that span reads KTKPTQ. The region spanning 295–547 is the Glutamine amidotransferase type-1 domain; that stretch reads TIGMVGKYVD…VEAALAHQQS (253 aa). Residue Gly356 participates in L-glutamine binding. Cys383 acts as the Nucleophile; for glutamine hydrolysis in catalysis. L-glutamine contacts are provided by residues 384-387, Glu407, and Arg473; that span reads LGMQ. Residues His520 and Glu522 contribute to the active site.

The protein belongs to the CTP synthase family. In terms of assembly, homotetramer.

It carries out the reaction UTP + L-glutamine + ATP + H2O = CTP + L-glutamate + ADP + phosphate + 2 H(+). The enzyme catalyses L-glutamine + H2O = L-glutamate + NH4(+). It catalyses the reaction UTP + NH4(+) + ATP = CTP + ADP + phosphate + 2 H(+). It participates in pyrimidine metabolism; CTP biosynthesis via de novo pathway; CTP from UDP: step 2/2. Allosterically activated by GTP, when glutamine is the substrate; GTP has no effect on the reaction when ammonia is the substrate. The allosteric effector GTP functions by stabilizing the protein conformation that binds the tetrahedral intermediate(s) formed during glutamine hydrolysis. Inhibited by the product CTP, via allosteric rather than competitive inhibition. Catalyzes the ATP-dependent amination of UTP to CTP with either L-glutamine or ammonia as the source of nitrogen. Regulates intracellular CTP levels through interactions with the four ribonucleotide triphosphates. In Paraburkholderia xenovorans (strain LB400), this protein is CTP synthase.